The sequence spans 382 residues: Type 2 DNA topoisomerase 6 subunit A (382 aa).

The region spanning 14 to 155 is the Topo IIA-type catalytic domain; the sequence is YDPQKVLKKL…MHITADRRGY (142 aa). Catalysis depends on Tyr108, which acts as the O-(5'-phospho-DNA)-tyrosine intermediate. Glu202 and Asp254 together coordinate Mg(2+).

Belongs to the TOP6A family. As to quaternary structure, homodimer. Heterotetramer of two Top6A and two Top6B chains. Requires Mg(2+) as cofactor.

The catalysed reaction is ATP-dependent breakage, passage and rejoining of double-stranded DNA.. In terms of biological role, relaxes both positive and negative superturns and exhibits a strong decatenase activity. In Pyrococcus horikoshii (strain ATCC 700860 / DSM 12428 / JCM 9974 / NBRC 100139 / OT-3), this protein is Type 2 DNA topoisomerase 6 subunit A.